The primary structure comprises 301 residues: 33 kDa chaperonin (301 aa).

Disulfide bonds link C239–C241 and C272–C275.

It belongs to the HSP33 family. Post-translationally, under oxidizing conditions two disulfide bonds are formed involving the reactive cysteines. Under reducing conditions zinc is bound to the reactive cysteines and the protein is inactive.

It is found in the cytoplasm. Its function is as follows. Redox regulated molecular chaperone. Protects both thermally unfolding and oxidatively damaged proteins from irreversible aggregation. Plays an important role in the bacterial defense system toward oxidative stress. This chain is 33 kDa chaperonin, found in Nostoc sp. (strain PCC 7120 / SAG 25.82 / UTEX 2576).